The sequence spans 363 residues: 3-dehydroquinate synthase (363 aa).

NAD(+)-binding positions include 74–79 (DGEQYK), 108–112 (GVIGD), 132–133 (TT), Lys145, Lys154, and 172–175 (CLKT). Residues Glu187, His250, and His267 each contribute to the Zn(2+) site.

The protein belongs to the sugar phosphate cyclases superfamily. Dehydroquinate synthase family. The cofactor is NAD(+). It depends on Co(2+) as a cofactor. Zn(2+) serves as cofactor.

Its subcellular location is the cytoplasm. The catalysed reaction is 7-phospho-2-dehydro-3-deoxy-D-arabino-heptonate = 3-dehydroquinate + phosphate. It functions in the pathway metabolic intermediate biosynthesis; chorismate biosynthesis; chorismate from D-erythrose 4-phosphate and phosphoenolpyruvate: step 2/7. Functionally, catalyzes the conversion of 3-deoxy-D-arabino-heptulosonate 7-phosphate (DAHP) to dehydroquinate (DHQ). In Buchnera aphidicola subsp. Acyrthosiphon pisum (strain APS) (Acyrthosiphon pisum symbiotic bacterium), this protein is 3-dehydroquinate synthase.